Consider the following 561-residue polypeptide: Putative transport protein YbjL (561 aa).

5 helical membrane-spanning segments follow: residues 8-28, 32-52, 66-86, 94-114, and 158-178; these read LLNG…LCLG, LGSI…LLGQ, FMLF…SIFF, MLAL…GKLF, and NLSL…IVGA. RCK C-terminal domains follow at residues 202–288 and 292–373; these read LDTD…SFRN and VFDR…RIGF. 5 consecutive transmembrane segments (helical) span residues 383–403, 406–426, 451–471, 475–495, and 540–560; these read LLAF…TFQF, FSFG…LGFM, VFMA…LGAI, MLVA…LFGA, and AIAN…WPGL.

It belongs to the AAE transporter (TC 2.A.81) family. YbjL subfamily.

It localises to the cell membrane. The chain is Putative transport protein YbjL from Escherichia fergusonii (strain ATCC 35469 / DSM 13698 / CCUG 18766 / IAM 14443 / JCM 21226 / LMG 7866 / NBRC 102419 / NCTC 12128 / CDC 0568-73).